Consider the following 392-residue polypeptide: Formate-dependent phosphoribosylglycinamide formyltransferase (392 aa).

N(1)-(5-phospho-beta-D-ribosyl)glycinamide contacts are provided by residues 22 to 23 and E82; that span reads EL. Residues R114, K155, 160 to 165, 195 to 198, and E203 contribute to the ATP site; these read SSGKGQ and EGVV. The ATP-grasp domain maps to 119–308; the sequence is RLAAEELGLP…EFALHVRAFL (190 aa). The Mg(2+) site is built by E267 and E279. N(1)-(5-phospho-beta-D-ribosyl)glycinamide contacts are provided by residues D286, K355, and 362–363; that span reads RR.

Belongs to the PurK/PurT family. As to quaternary structure, homodimer.

It catalyses the reaction N(1)-(5-phospho-beta-D-ribosyl)glycinamide + formate + ATP = N(2)-formyl-N(1)-(5-phospho-beta-D-ribosyl)glycinamide + ADP + phosphate + H(+). It functions in the pathway purine metabolism; IMP biosynthesis via de novo pathway; N(2)-formyl-N(1)-(5-phospho-D-ribosyl)glycinamide from N(1)-(5-phospho-D-ribosyl)glycinamide (formate route): step 1/1. Its function is as follows. Involved in the de novo purine biosynthesis. Catalyzes the transfer of formate to 5-phospho-ribosyl-glycinamide (GAR), producing 5-phospho-ribosyl-N-formylglycinamide (FGAR). Formate is provided by PurU via hydrolysis of 10-formyl-tetrahydrofolate. The protein is Formate-dependent phosphoribosylglycinamide formyltransferase of Salmonella typhimurium (strain LT2 / SGSC1412 / ATCC 700720).